The primary structure comprises 348 residues: Alcohol dehydrogenase 2 (348 aa).

Ser-2 is modified (N-acetylserine). Residue Cys-44 coordinates Zn(2+). NAD(+)-binding residues include His-45, Thr-46, and His-49. 7 residues coordinate Zn(2+): His-67, Glu-68, Cys-98, Cys-101, Cys-104, Cys-112, and Cys-154. The NAD(+) site is built by Gly-181, Gly-182, Leu-183, Asp-202, and Lys-207. Residue Ser-213 is modified to Phosphoserine. An NAD(+)-binding site is contributed by Phe-222. Residue Thr-223 is modified to Phosphothreonine. Glycyl lysine isopeptide (Lys-Gly) (interchain with G-Cter in ubiquitin) cross-links involve residues Lys-226 and Lys-234. Val-269 lines the NAD(+) pocket. Ser-279 bears the Phosphoserine mark. Lys-287 participates in a covalent cross-link: Glycyl lysine isopeptide (Lys-Gly) (interchain with G-Cter in ubiquitin). NAD(+) is bound by residues Ser-294 and Val-296. Ser-316 is modified (phosphoserine). Lys-319 is covalently cross-linked (Glycyl lysine isopeptide (Lys-Gly) (interchain with G-Cter in ubiquitin)). Arg-341 is a binding site for NAD(+).

This sequence belongs to the zinc-containing alcohol dehydrogenase family. In terms of assembly, homotetramer. Zn(2+) is required as a cofactor.

It is found in the cytoplasm. The enzyme catalyses a primary alcohol + NAD(+) = an aldehyde + NADH + H(+). It carries out the reaction a secondary alcohol + NAD(+) = a ketone + NADH + H(+). The catalysed reaction is ethanol + NAD(+) = acetaldehyde + NADH + H(+). It catalyses the reaction butan-1-ol + NAD(+) = butanal + NADH + H(+). The enzyme catalyses hexan-1-ol + NAD(+) = hexanal + NADH + H(+). Preferentially oxidative, glucose-repressed isozyme that catalyzes the conversion of ethanol to acetaldehyde. Main enzyme involved in ethanol consumption. Acts on a variety of primary unbranched aliphatic alcohols. Also produces ethanol from glucose, albeit less than ADH1. The polypeptide is Alcohol dehydrogenase 2 (ADH2) (Saccharomyces cerevisiae (strain ATCC 204508 / S288c) (Baker's yeast)).